The primary structure comprises 116 residues: Dynein light chain Tctex-type 3 (116 aa).

The residue at position 4 (Y4) is a 3'-nitrotyrosine.

The protein belongs to the dynein light chain Tctex-type family. As to quaternary structure, homodimer. The cytoplasmic dynein 1 complex consists of two catalytic heavy chains (HCs) and a number of non-catalytic subunits presented by intermediate chains (ICs), light intermediate chains (LICs) and light chains (LCs); the composition seems to vary in respect to the IC, LIC and LC composition. The heavy chain homodimer serves as a scaffold for the probable homodimeric assembly of the respective non-catalytic subunits. The ICs and LICs bind directly to the HC dimer and the LCs assemble on the IC dimer. DYNLT1 and DYNLT3 compete for association with dynein IC (DYNC1I1 or DYNC1I2). Self-associates. Interacts with DYNC1I1 and DYNC1I2. Interacts with BUB3. Interacts with SATB1 in nucleus to form complex with matrix attachment regions (MARs) of DNA.

It is found in the nucleus. Its subcellular location is the cytoplasm. The protein resides in the cytoskeleton. It localises to the chromosome. The protein localises to the centromere. It is found in the kinetochore. In terms of biological role, acts as one of several non-catalytic accessory components of the cytoplasmic dynein 1 complex that are thought to be involved in linking dynein to cargos and to adapter proteins that regulate dynein function. Cytoplasmic dynein 1 acts as a motor for the intracellular retrograde motility of vesicles and organelles along microtubules. Probably binds BUB3 as part of transport cargo. Required for the efficient progression through mitosis. This is Dynein light chain Tctex-type 3 (DYNLT3) from Homo sapiens (Human).